The primary structure comprises 503 residues: Glycerol kinase (503 aa).

Threonine 14 contacts ADP. ATP is bound by residues threonine 14, threonine 15, and serine 16. Residue threonine 14 coordinates sn-glycerol 3-phosphate. Residue arginine 18 coordinates ADP. Sn-glycerol 3-phosphate-binding residues include arginine 84, glutamate 85, tyrosine 136, and aspartate 246. Glycerol-binding residues include arginine 84, glutamate 85, tyrosine 136, aspartate 246, and glutamine 247. ADP is bound by residues threonine 268 and glycine 311. ATP is bound by residues threonine 268, glycine 311, glutamine 315, and glycine 412. ADP-binding residues include glycine 412 and asparagine 416.

This sequence belongs to the FGGY kinase family. In terms of assembly, homotetramer and homodimer (in equilibrium). Heterodimer with EIIA-Glc. Binds 1 zinc ion per glycerol kinase EIIA-Glc dimer. The zinc ion is important for dimerization.

The enzyme catalyses glycerol + ATP = sn-glycerol 3-phosphate + ADP + H(+). Its pathway is polyol metabolism; glycerol degradation via glycerol kinase pathway; sn-glycerol 3-phosphate from glycerol: step 1/1. Activity of this regulatory enzyme is affected by several metabolites. Allosterically and non-competitively inhibited by fructose 1,6-bisphosphate (FBP) and unphosphorylated phosphocarrier protein EIIA-Glc (III-Glc), an integral component of the bacterial phosphotransferase (PTS) system. Key enzyme in the regulation of glycerol uptake and metabolism. Catalyzes the phosphorylation of glycerol to yield sn-glycerol 3-phosphate. This chain is Glycerol kinase, found in Klebsiella pneumoniae subsp. pneumoniae (strain ATCC 700721 / MGH 78578).